Here is a 252-residue protein sequence, read N- to C-terminus: Ubiquinone/menaquinone biosynthesis C-methyltransferase UbiE (252 aa).

S-adenosyl-L-methionine-binding positions include threonine 71, aspartate 100, 124 to 125 (DA), and serine 141.

Belongs to the class I-like SAM-binding methyltransferase superfamily. MenG/UbiE family.

It catalyses the reaction a 2-demethylmenaquinol + S-adenosyl-L-methionine = a menaquinol + S-adenosyl-L-homocysteine + H(+). The enzyme catalyses a 2-methoxy-6-(all-trans-polyprenyl)benzene-1,4-diol + S-adenosyl-L-methionine = a 5-methoxy-2-methyl-3-(all-trans-polyprenyl)benzene-1,4-diol + S-adenosyl-L-homocysteine + H(+). It functions in the pathway quinol/quinone metabolism; menaquinone biosynthesis; menaquinol from 1,4-dihydroxy-2-naphthoate: step 2/2. It participates in cofactor biosynthesis; ubiquinone biosynthesis. Its function is as follows. Methyltransferase required for the conversion of demethylmenaquinol (DMKH2) to menaquinol (MKH2) and the conversion of 2-polyprenyl-6-methoxy-1,4-benzoquinol (DDMQH2) to 2-polyprenyl-3-methyl-6-methoxy-1,4-benzoquinol (DMQH2). The chain is Ubiquinone/menaquinone biosynthesis C-methyltransferase UbiE from Caulobacter sp. (strain K31).